The primary structure comprises 253 residues: MRKPIIAGNWKMNKTVKEAKDFINELPTLPDTKEVESVICAPTIQLDALVTLVNDGKAKGLQIGAQNAYFEDNGAFTGETSPVALADLGVKYVVIGHSERREIFHETDEEINKKAHAIFNHGMTPIVCVGETDEERESGKANEVVGNQVKKAVEGLSEAQLQQLVIAYEPIWAIGTGKSSTAKDANEMCAFVRQTVAELSSQTVADATRIQYGGSVKPNNIKEYMAESDIDGALVGGASLKVDDFVQLLEGAK.

9-11 (NWK) provides a ligand contact to substrate. Residue His-97 is the Electrophile of the active site. The active-site Proton acceptor is the Glu-169. Substrate is bound by residues Gly-175, Ser-215, and 236–237 (GG).

It belongs to the triosephosphate isomerase family. Homodimer.

The protein localises to the cytoplasm. The enzyme catalyses D-glyceraldehyde 3-phosphate = dihydroxyacetone phosphate. Its pathway is carbohydrate biosynthesis; gluconeogenesis. The protein operates within carbohydrate degradation; glycolysis; D-glyceraldehyde 3-phosphate from glycerone phosphate: step 1/1. Functionally, involved in the gluconeogenesis. Catalyzes stereospecifically the conversion of dihydroxyacetone phosphate (DHAP) to D-glyceraldehyde-3-phosphate (G3P). In Staphylococcus saprophyticus subsp. saprophyticus (strain ATCC 15305 / DSM 20229 / NCIMB 8711 / NCTC 7292 / S-41), this protein is Triosephosphate isomerase.